The primary structure comprises 367 residues: Glutamate 5-kinase (367 aa).

Lys10 is a binding site for ATP. The substrate site is built by Ser50, Asp137, and Asn149. ATP-binding positions include Thr169 to Asp170 and Thr211 to Lys217. A PUA domain is found at Ala275–Glu353.

Belongs to the glutamate 5-kinase family.

The protein resides in the cytoplasm. It carries out the reaction L-glutamate + ATP = L-glutamyl 5-phosphate + ADP. It participates in amino-acid biosynthesis; L-proline biosynthesis; L-glutamate 5-semialdehyde from L-glutamate: step 1/2. In terms of biological role, catalyzes the transfer of a phosphate group to glutamate to form L-glutamate 5-phosphate. The sequence is that of Glutamate 5-kinase from Salmonella arizonae (strain ATCC BAA-731 / CDC346-86 / RSK2980).